The chain runs to 214 residues: Pyridoxine/pyridoxamine 5'-phosphate oxidase (214 aa).

Substrate-binding positions include 8 to 11 (RTNY) and Lys66. FMN is bound by residues 61–66 (RIVLIK), 76–77 (FT), Arg82, Lys83, and Gln105. Residues Tyr123, Arg127, and Ser131 each contribute to the substrate site. FMN is bound by residues 140-141 (QS) and Trp184. 190–192 (RLH) is a binding site for substrate. Arg194 contributes to the FMN binding site.

It belongs to the pyridoxamine 5'-phosphate oxidase family. Homodimer. FMN is required as a cofactor.

The enzyme catalyses pyridoxamine 5'-phosphate + O2 + H2O = pyridoxal 5'-phosphate + H2O2 + NH4(+). The catalysed reaction is pyridoxine 5'-phosphate + O2 = pyridoxal 5'-phosphate + H2O2. The protein operates within cofactor metabolism; pyridoxal 5'-phosphate salvage; pyridoxal 5'-phosphate from pyridoxamine 5'-phosphate: step 1/1. Its pathway is cofactor metabolism; pyridoxal 5'-phosphate salvage; pyridoxal 5'-phosphate from pyridoxine 5'-phosphate: step 1/1. Catalyzes the oxidation of either pyridoxine 5'-phosphate (PNP) or pyridoxamine 5'-phosphate (PMP) into pyridoxal 5'-phosphate (PLP). This Burkholderia pseudomallei (strain 1106a) protein is Pyridoxine/pyridoxamine 5'-phosphate oxidase.